The sequence spans 338 residues: Tetraacyldisaccharide 4'-kinase (338 aa).

Position 67-74 (67-74 (IAGGAGKT)) interacts with ATP.

It belongs to the LpxK family.

It carries out the reaction a lipid A disaccharide + ATP = a lipid IVA + ADP + H(+). It functions in the pathway glycolipid biosynthesis; lipid IV(A) biosynthesis; lipid IV(A) from (3R)-3-hydroxytetradecanoyl-[acyl-carrier-protein] and UDP-N-acetyl-alpha-D-glucosamine: step 6/6. Its function is as follows. Transfers the gamma-phosphate of ATP to the 4'-position of a tetraacyldisaccharide 1-phosphate intermediate (termed DS-1-P) to form tetraacyldisaccharide 1,4'-bis-phosphate (lipid IVA). The sequence is that of Tetraacyldisaccharide 4'-kinase from Acidovorax ebreus (strain TPSY) (Diaphorobacter sp. (strain TPSY)).